Consider the following 627-residue polypeptide: MACPF domain-containing protein At1g14780 (627 aa).

In terms of domain architecture, MACPF spans 1 to 339 (MSRDGGDVIE…PPLMDLQYFL (339 aa)).

Belongs to the complement C6/C7/C8/C9 (TC 1.C.39) family.

In terms of biological role, negatively controls the salicylic acid (SA)-mediated pathway of programmed cell death in plant immunity. The protein is MACPF domain-containing protein At1g14780 of Arabidopsis thaliana (Mouse-ear cress).